The following is a 140-amino-acid chain: uncharacterized protein (140 aa).

This is an uncharacterized protein from Escherichia coli (strain K12).